A 326-amino-acid chain; its full sequence is Ribose-phosphate pyrophosphokinase 4 (326 aa).

D140, H142, H151, and D155 together coordinate Mg(2+).

It belongs to the ribose-phosphate pyrophosphokinase family.

Its subcellular location is the cytoplasm. It carries out the reaction D-ribose 5-phosphate + ATP = 5-phospho-alpha-D-ribose 1-diphosphate + AMP + H(+). It functions in the pathway metabolic intermediate biosynthesis; 5-phospho-alpha-D-ribose 1-diphosphate biosynthesis; 5-phospho-alpha-D-ribose 1-diphosphate from D-ribose 5-phosphate (route I): step 1/1. In terms of biological role, 5-phosphoribose 1-diphosphate synthase involved in nucleotide, histidine, and tryptophan biosynthesis. Active in heteromultimeric complexes with other 5-phosphoribose 1-diphosphate synthases (PRS2, PRS3, PRS4 and PRS5). The chain is Ribose-phosphate pyrophosphokinase 4 (PRS4) from Saccharomyces cerevisiae (strain ATCC 204508 / S288c) (Baker's yeast).